Here is a 328-residue protein sequence, read N- to C-terminus: Tetraacyldisaccharide 4'-kinase (328 aa).

55-62 provides a ligand contact to ATP; sequence TAGGNGKT.

It belongs to the LpxK family.

The catalysed reaction is a lipid A disaccharide + ATP = a lipid IVA + ADP + H(+). Its pathway is glycolipid biosynthesis; lipid IV(A) biosynthesis; lipid IV(A) from (3R)-3-hydroxytetradecanoyl-[acyl-carrier-protein] and UDP-N-acetyl-alpha-D-glucosamine: step 6/6. In terms of biological role, transfers the gamma-phosphate of ATP to the 4'-position of a tetraacyldisaccharide 1-phosphate intermediate (termed DS-1-P) to form tetraacyldisaccharide 1,4'-bis-phosphate (lipid IVA). The chain is Tetraacyldisaccharide 4'-kinase from Escherichia coli (strain K12 / MC4100 / BW2952).